Here is a 114-residue protein sequence, read N- to C-terminus: Fructose-bisphosphate aldolase 2 (114 aa).

35 to 38 (NIDT) serves as a coordination point for dihydroxyacetone phosphate.

It belongs to the class II fructose-bisphosphate aldolase family. Homodimer. Zn(2+) is required as a cofactor.

The catalysed reaction is beta-D-fructose 1,6-bisphosphate = D-glyceraldehyde 3-phosphate + dihydroxyacetone phosphate. It functions in the pathway carbohydrate biosynthesis; Calvin cycle. The protein operates within carbohydrate degradation; glycolysis; D-glyceraldehyde 3-phosphate and glycerone phosphate from D-glucose: step 4/4. Functionally, catalyzes the aldol condensation of dihydroxyacetone phosphate (DHAP or glycerone-phosphate) with glyceraldehyde 3-phosphate (G3P) to form fructose 1,6-bisphosphate (FBP) in gluconeogenesis and the reverse reaction in glycolysis. The sequence is that of Fructose-bisphosphate aldolase 2 (cbbA) from Rhodobacter capsulatus (Rhodopseudomonas capsulata).